Reading from the N-terminus, the 148-residue chain is UPF0179 protein VNG_1401C (148 aa).

Belongs to the UPF0179 family.

The sequence is that of UPF0179 protein VNG_1401C from Halobacterium salinarum (strain ATCC 700922 / JCM 11081 / NRC-1) (Halobacterium halobium).